The chain runs to 949 residues: Syndetin (949 aa).

A disordered region spans residues Met-1–Asn-28. The span at Met-8 to Glu-18 shows a compositional bias: polar residues. 2 coiled-coil regions span residues Ser-82 to Val-104 and Tyr-198 to Ile-226. The tract at residues Phe-509–Asp-581 is disordered. Residues Val-569 to Asp-581 show a composition bias toward basic and acidic residues.

It belongs to the syndetin family. Component of the endosome-associated retrograde protein (EARP) complex.

It localises to the recycling endosome. The protein localises to the membrane. Its function is as follows. Acts as a component of the EARP complex that is involved in endocytic recycling. The EARP complex associates with Rab4-positive endosomes and promotes recycling of internalized transferrin receptor (TFRC) to the plasma membrane. The chain is Syndetin from Gallus gallus (Chicken).